The chain runs to 258 residues: Acyl-[acyl-carrier-protein]--UDP-N-acetylglucosamine O-acyltransferase (258 aa).

Belongs to the transferase hexapeptide repeat family. LpxA subfamily. As to quaternary structure, homotrimer.

It localises to the cytoplasm. The enzyme catalyses a (3R)-hydroxyacyl-[ACP] + UDP-N-acetyl-alpha-D-glucosamine = a UDP-3-O-[(3R)-3-hydroxyacyl]-N-acetyl-alpha-D-glucosamine + holo-[ACP]. It functions in the pathway glycolipid biosynthesis; lipid IV(A) biosynthesis; lipid IV(A) from (3R)-3-hydroxytetradecanoyl-[acyl-carrier-protein] and UDP-N-acetyl-alpha-D-glucosamine: step 1/6. Involved in the biosynthesis of lipid A, a phosphorylated glycolipid that anchors the lipopolysaccharide to the outer membrane of the cell. The sequence is that of Acyl-[acyl-carrier-protein]--UDP-N-acetylglucosamine O-acyltransferase from Pseudomonas fluorescens (strain ATCC BAA-477 / NRRL B-23932 / Pf-5).